The primary structure comprises 233 residues: Large ribosomal subunit protein uL1 (233 aa).

The protein belongs to the universal ribosomal protein uL1 family. In terms of assembly, part of the 50S ribosomal subunit.

In terms of biological role, binds directly to 23S rRNA. The L1 stalk is quite mobile in the ribosome, and is involved in E site tRNA release. Its function is as follows. Protein L1 is also a translational repressor protein, it controls the translation of the L11 operon by binding to its mRNA. The chain is Large ribosomal subunit protein uL1 from Shewanella putrefaciens (strain CN-32 / ATCC BAA-453).